The following is a 214-amino-acid chain: RNA pyrophosphohydrolase (214 aa).

Positions 6-149 constitute a Nudix hydrolase domain; it reads GFRPNVGIIL…KRDVYQLALT (144 aa). The Nudix box motif lies at 38-59; that stretch reads GGIKYGETPMQAMYRELHEETG.

It belongs to the Nudix hydrolase family. RppH subfamily. Requires a divalent metal cation as cofactor.

Functionally, accelerates the degradation of transcripts by removing pyrophosphate from the 5'-end of triphosphorylated RNA, leading to a more labile monophosphorylated state that can stimulate subsequent ribonuclease cleavage. This is RNA pyrophosphohydrolase from Burkholderia cenocepacia (strain HI2424).